The primary structure comprises 337 residues: Ferredoxin--NADP reductase (337 aa).

FAD is bound by residues D33, Q41, Y46, A86, F120, D286, and T327.

Belongs to the ferredoxin--NADP reductase type 2 family. In terms of assembly, homodimer. Requires FAD as cofactor.

The enzyme catalyses 2 reduced [2Fe-2S]-[ferredoxin] + NADP(+) + H(+) = 2 oxidized [2Fe-2S]-[ferredoxin] + NADPH. In Rickettsia canadensis (strain McKiel), this protein is Ferredoxin--NADP reductase.